The sequence spans 393 residues: MTIPATRKDLMIVNMGPHHPSMHGVLRLILTLDGEDVIDCEPVLGYLHRGMEKIAENRTIIQYLPYVTRWDYLATMFTEVITVNAPEQLGNIQVPKRAGYIRTIMLELSRIASHLLWLGPFMADIGAQTPFFYIFRERELIYDLFEAATGMRMMHNYFRIGGVAADLPHGWIDKCLDFCNYFLTGLAEYEKLITRNPIFLERVEGIGIIGKEEAISWGLSGPMLRASGMQWDLRKIDNSECYKKFDWEVQWQKEGDSLARYLVRIGEMRESIKMIQQALEGIPGGPYENLEIRCFDRERYPEWGGFEYRFISKKPSPTFELPKQELYVRVEAPKGELGVFLIGDRSSFPWRWKIRPPGFMNLQILPQLVKRMKLADIMTILGSIDIIMGEVDR.

This sequence belongs to the complex I 49 kDa subunit family. In terms of assembly, NDH is composed of at least 16 different subunits, 5 of which are encoded in the nucleus.

The protein localises to the plastid. The protein resides in the chloroplast thylakoid membrane. It catalyses the reaction a plastoquinone + NADH + (n+1) H(+)(in) = a plastoquinol + NAD(+) + n H(+)(out). The enzyme catalyses a plastoquinone + NADPH + (n+1) H(+)(in) = a plastoquinol + NADP(+) + n H(+)(out). NDH shuttles electrons from NAD(P)H:plastoquinone, via FMN and iron-sulfur (Fe-S) centers, to quinones in the photosynthetic chain and possibly in a chloroplast respiratory chain. The immediate electron acceptor for the enzyme in this species is believed to be plastoquinone. Couples the redox reaction to proton translocation, and thus conserves the redox energy in a proton gradient. The polypeptide is NAD(P)H-quinone oxidoreductase subunit H, chloroplastic (Pelargonium hortorum (Common geranium)).